We begin with the raw amino-acid sequence, 51 residues long: Large ribosomal subunit protein eL39 (51 aa).

It belongs to the eukaryotic ribosomal protein eL39 family.

The polypeptide is Large ribosomal subunit protein eL39 (Staphylothermus marinus (strain ATCC 43588 / DSM 3639 / JCM 9404 / F1)).